A 369-amino-acid chain; its full sequence is 3,7-dimethylxanthine N-methyltransferase TCS1 (369 aa).

Tyrosine 24 contributes to the S-adenosyl-L-homocysteine binding site. Threonine 31 is a binding site for caffeine. S-adenosyl-L-homocysteine-binding residues include cysteine 66, asparagine 71, aspartate 103, leucine 104, serine 138, and phenylalanine 139. Caffeine contacts are provided by tyrosine 156, histidine 159, and tryptophan 160. Asparagine 177 serves as a coordination point for Mg(2+). Arginine 225 is a binding site for caffeine. Mg(2+) contacts are provided by aspartate 263, phenylalanine 265, and asparagine 266. Phenylalanine 321 lines the caffeine pocket.

Belongs to the methyltransferase superfamily. Type-7 methyltransferase family. Requires Mg(2+) as cofactor. Expressed in young leaves and flowers.

The enzyme catalyses 7-methylxanthine + S-adenosyl-L-methionine = theobromine + S-adenosyl-L-homocysteine + H(+). It catalyses the reaction theobromine + S-adenosyl-L-methionine = caffeine + S-adenosyl-L-homocysteine + H(+). The catalysed reaction is 1,7-dimethylxanthine + S-adenosyl-L-methionine = caffeine + S-adenosyl-L-homocysteine + H(+). The protein operates within alkaloid biosynthesis. Involved in the biosynthesis of caffeine. Catalyzes the conversion of 7-methylxanthine (7mX) to theobromine and of theobromine to caffeine. Has 3-N- and 1-N-methylation activity. This chain is 3,7-dimethylxanthine N-methyltransferase TCS1, found in Camellia sinensis (Tea plant).